We begin with the raw amino-acid sequence, 359 residues long: N-acetylneuraminate-9-phosphate synthase (359 aa).

Residues Lys-61, Lys-74, and Lys-79 each carry the N6-acetyllysine modification. Ser-275 is subject to Phosphoserine. Lys-290 bears the N6-acetyllysine mark. One can recognise an AFP-like domain in the interval 294-353; the sequence is SVVAKVKIPEGTILTMDMLTVKVGEPKGYPPEDIFNLVGKKVLVTVEEDDTIMEELVDNH.

As to expression, ubiquitous.

It carries out the reaction aldehydo-N-acetyl-D-mannosamine 6-phosphate + phosphoenolpyruvate + H2O = N-acetylneuraminate 9-phosphate + phosphate. It catalyses the reaction aldehydo-D-mannose 6-phosphate + phosphoenolpyruvate + H2O = 3-deoxy-D-glycero-beta-D-galacto-non-2-ulopyranosonate 9-phosphate + phosphate. Functionally, catalyzes the condensation of phosphoenolpyruvate (PEP) and N-acetylmannosamine 6-phosphate (ManNAc-6-P) to synthesize N-acetylneuraminate-9-phosphate (Neu5Ac-9-P). Also catalyzes the condensation of PEP and D-mannose 6-phosphate (Man-6-P) to produce 3-deoxy-D-glycero-beta-D-galacto-non-2-ulopyranosonate 9-phosphate (KDN-9-P). Neu5Ac-9-P and KDN-9-P are the phosphorylated forms of sialic acids N-acetylneuraminic acid (Neu5Ac) and deaminoneuraminic acid (KDN), respectively. Required for brain and skeletal development. This chain is N-acetylneuraminate-9-phosphate synthase, found in Homo sapiens (Human).